Consider the following 132-residue polypeptide: MKGFIVFSLSLCLVFTVCLAEDELMKEAVRKFLKCVACAEPGSELRTEYHKCSELKPERLKATMKACCDETMPAGSDEDARWALVCADDGILTKVCDCVKAKLPMAEVTTAEMEQFSKYKECAKKLNEEKCK.

A signal peptide spans 1-20 (MKGFIVFSLSLCLVFTVCLA). Residues 21–30 (EDELMKEAVR) constitute a propeptide that is removed on maturation.

Post-translationally, contains 5 disulfide bonds. As to expression, expressed by the venom gland.

Its subcellular location is the secreted. Probable ion channel inhibitor. This is U10-hexatoxin-Hi1a from Hadronyche infensa (Fraser island funnel-web spider).